The chain runs to 250 residues: MTQLYRIGQIVPSSNTTMETEIPAMLNARQAIRPERFTFHSSRMRMKQVKKEELAAMDAESDRCAVELSDAKVDVLGYACLVAIMAMGLGYHRQSEKRLQQATADNDALAPVITSAGALVEALHVMKAKRIAIVAPYMKPLTELVVNYIREEGFEVQDWRALEIPDNLAVARHDPANLPGIVAGMDLEGVDVVVLSACVQMQSLPAVAKVEAQTGKPVVTAAIATTYAMLKALDLEPIVPGAGALLSGAY.

Substrate contacts are provided by residues Asn15, 80–82, Tyr137, and Asn167; that span reads CLV. Cys80 (nucleophile) is an active-site residue. S-(2-succinyl)cysteine is present on Cys80. Cys198 acts as the Proton donor in catalysis. A substrate-binding site is contributed by 199–200; that stretch reads VQ.

The protein belongs to the maleate isomerase family. Homodimer.

The catalysed reaction is maleate = fumarate. Its pathway is cofactor degradation; nicotinate degradation. In terms of biological role, catalyzes cis-trans isomerization of the C2-C3 double bond in maleate to yield fumarate in the aerobic nicotinate degradation pathway. This Pseudomonas putida (strain ATCC 47054 / DSM 6125 / CFBP 8728 / NCIMB 11950 / KT2440) protein is Maleate isomerase.